A 166-amino-acid chain; its full sequence is Lipoprotein signal peptidase (166 aa).

A run of 3 helical transmembrane segments spans residues 12–32, 70–90, and 102–122; these read WLWL…LILQ, WFFA…MYRS, and ALII…GFVV. Residues Asp-123 and Asp-141 contribute to the active site. The chain crosses the membrane as a helical span at residues 137-157; the sequence is FNLADSAICIGAALIVLEGFL.

The protein belongs to the peptidase A8 family.

The protein resides in the cell inner membrane. The catalysed reaction is Release of signal peptides from bacterial membrane prolipoproteins. Hydrolyzes -Xaa-Yaa-Zaa-|-(S,diacylglyceryl)Cys-, in which Xaa is hydrophobic (preferably Leu), and Yaa (Ala or Ser) and Zaa (Gly or Ala) have small, neutral side chains.. Its pathway is protein modification; lipoprotein biosynthesis (signal peptide cleavage). Functionally, this protein specifically catalyzes the removal of signal peptides from prolipoproteins. The chain is Lipoprotein signal peptidase from Salmonella agona (strain SL483).